Reading from the N-terminus, the 343-residue chain is Mitochondrial amidoxime-reducing component 1 (343 aa).

The Mitochondrial matrix portion of the chain corresponds to 1 to 25; sequence MSNTVFSGAVGPLRAAALSISRHRL. The chain crosses the membrane as a helical; Signal-anchor for type II membrane protein span at residues 26-44; sequence PLLCAAGLGLTAVASWMWW. Topologically, residues 45–343 are cytoplasmic; the sequence is RKRQGEAEDL…DPVYRVTRKG (299 aa). Residues Lys69, Ser70, and Arg94 each coordinate Mo-molybdopterin. An MOSC N-terminal region region spans residues 95–186; the sequence is HWLVVTEEGN…SSQPYRLVHF (92 aa). One can recognise an MOSC domain in the interval 181-339; the sequence is YRLVHFEADV…IRVGDPVYRV (159 aa). The Mo-molybdopterin site is built by Ser215, Arg242, Arg276, Cys277, and Tyr321.

The cofactor is Mo-molybdopterin.

The protein localises to the mitochondrion outer membrane. It localises to the membrane. It catalyses the reaction N(omega)-hydroxy-L-arginine + 2 Fe(II)-[cytochrome b5] + 2 H(+) = L-arginine + 2 Fe(III)-[cytochrome b5] + H2O. Catalyzes the reduction of N-oxygenated molecules, acting as a counterpart of cytochrome P450 and flavin-containing monooxygenases in metabolic cycles. As a component of prodrug-converting system, reduces a multitude of N-hydroxylated prodrugs particularly amidoximes, leading to increased drug bioavailability. May be involved in mitochondrial N(omega)-hydroxy-L-arginine (NOHA) reduction, regulating endogenous nitric oxide levels and biosynthesis. Postulated to cleave the N-OH bond of N-hydroxylated substrates in concert with electron transfer from NADH to cytochrome b5 reductase then to cytochrome b5, the ultimate electron donor that primes the active site for substrate reduction. The sequence is that of Mitochondrial amidoxime-reducing component 1 (mtarc1) from Xenopus laevis (African clawed frog).